The sequence spans 234 residues: Large ribosomal subunit protein uL1 (234 aa).

The protein belongs to the universal ribosomal protein uL1 family. As to quaternary structure, part of the 50S ribosomal subunit.

In terms of biological role, binds directly to 23S rRNA. The L1 stalk is quite mobile in the ribosome, and is involved in E site tRNA release. Protein L1 is also a translational repressor protein, it controls the translation of the L11 operon by binding to its mRNA. The polypeptide is Large ribosomal subunit protein uL1 (Yersinia enterocolitica serotype O:8 / biotype 1B (strain NCTC 13174 / 8081)).